The chain runs to 120 residues: uncharacterized protein (120 aa).

Residues 1–27 (MPKIGVSLIVLIMLIIFLAGCNKNEQN) form the signal peptide.

This is an uncharacterized protein from Bacillus subtilis (strain 168).